Consider the following 330-residue polypeptide: RNA/RNP complex-1-interacting phosphatase (330 aa).

Residues 1–12 (MSQWHHPRSGWG) show a composition bias toward basic residues. The disordered stretch occupies residues 1–32 (MSQWHHPRSGWGRRRDFSGRSSAKKKGGNHIP). One can recognise a Tyrosine-protein phosphatase domain in the interval 61 to 208 (FEKKLAPEEC…LQNGPIRKNW (148 aa)). Cysteine 152 acts as the Phosphocysteine intermediate in catalysis. 153 to 158 (THGLNR) is a substrate binding site. The active-site Proton donor/acceptor is arginine 158.

The protein belongs to the protein-tyrosine phosphatase family. Non-receptor class dual specificity subfamily. As to quaternary structure, monomer. May interact with SFRS7 and SFRS9/SRP30C.

It localises to the nucleus. The protein resides in the nucleus speckle. Its function is as follows. Possesses RNA 5'-triphosphatase and diphosphatase activities, but displays a poor protein-tyrosine phosphatase activity. In addition, has phosphatase activity with ATP, ADP and O-methylfluorescein phosphate (in vitro). Binds to RNA. May participate in nuclear mRNA metabolism. This chain is RNA/RNP complex-1-interacting phosphatase, found in Homo sapiens (Human).